We begin with the raw amino-acid sequence, 322 residues long: Chromoplast-specific carotenoid-associated protein, chromoplastic (322 aa).

Residues 1 to 58 (MAFVSQFNQLPCKTLALNPPQPQLTSKPSVFPIASIGATARAAAGKSLISVRPAFKVR) constitute a chromoplast transit peptide. Residues 67 to 88 (GEDKDEKYGDDSSVAVAEKEEE) are disordered.

This sequence belongs to the PAP/fibrillin family. In terms of tissue distribution, expressed in corollas. Not detected in fruits, stems, leaves, and roots.

The protein localises to the plastid. It localises to the chromoplast. Its function is as follows. May be involved in carotenoid sequestration within chromoplasts. In Cucumis sativus (Cucumber), this protein is Chromoplast-specific carotenoid-associated protein, chromoplastic (CHRC).